Here is a 167-residue protein sequence, read N- to C-terminus: Ureidoglycolate lyase (167 aa).

It belongs to the ureidoglycolate lyase family. In terms of assembly, homodimer. Ni(2+) is required as a cofactor.

The catalysed reaction is (S)-ureidoglycolate = urea + glyoxylate. It participates in nitrogen metabolism; (S)-allantoin degradation. Its function is as follows. Catalyzes the catabolism of the allantoin degradation intermediate (S)-ureidoglycolate, generating urea and glyoxylate. Involved in the utilization of allantoin as nitrogen source. This chain is Ureidoglycolate lyase, found in Pseudomonas putida (strain ATCC 700007 / DSM 6899 / JCM 31910 / BCRC 17059 / LMG 24140 / F1).